Consider the following 417-residue polypeptide: MARASSSSSPPSPRLLLLLLVAVAATLLPEAAALGNFTAESRGARWRSRRARRRAFENGLGRTPQMGWNSWNHFYCGINEQIIRETADALVNTGLAKLGYQYVNIDDCWAEYSRDSQGNFVPNRQTFPSGIKALADYVHAKGLKLGIYSDAGSQTCSNKMPGSLDHEEQDVKTFASWGVDYLKYDNCNDAGRSVMERYTRMSNAMKTYGKNIFFSLCEWGKENPATWAGRMGNSWRTTGDIADNWGSMTSRADENDQWAAYAGPGGWNDPDMLEVGNGGMSEAEYRSHFSIWALAKAPLLIGCDVRSMSQQTKNILSNSEVIAVNQDSLGVQGKKVQSDNGLEVWAGPLSNNRKAVVLWNRQSYQATITAHWSNIGLAGSVAVTARDLWAHSSFAAQGQISASVAPHDCKMYVLTPN.

The signal sequence occupies residues 1–55; that stretch reads MARASSSSSPPSPRLLLLLLVAVAATLLPEAAALGNFTAESRGARWRSRRARRRA. Residues tryptophan 71, aspartate 106, aspartate 107, cysteine 156, lysine 183, aspartate 185, tryptophan 219, arginine 236, and aspartate 240 each contribute to the alpha-D-galactose site. Intrachain disulfides connect cysteine 76-cysteine 108 and cysteine 156-cysteine 187. Aspartate 185 (nucleophile) is an active-site residue. The active-site Proton donor is the aspartate 240.

Belongs to the glycosyl hydrolase 27 family.

It carries out the reaction Hydrolysis of terminal, non-reducing alpha-D-galactose residues in alpha-D-galactosides, including galactose oligosaccharides, galactomannans and galactolipids.. The catalysed reaction is melibiose + H2O = D-galactose + D-glucose. It catalyses the reaction raffinose + H2O = sucrose + D-galactose. The enzyme catalyses stachyose + H2O = raffinose + D-galactose. It carries out the reaction alpha-D-Gal-(1-&gt;6)-beta-D-Man-(1-&gt;4)-beta-D-Man-(1-&gt;4)-D-Man + H2O = beta-D-Man-(1-&gt;4)-beta-D-Man-(1-&gt;4)-D-Man + D-galactose. The catalysed reaction is beta-D-Man-(1-&gt;4)-[alpha-D-Gal-(1-&gt;6)]-beta-D-Man-(1-&gt;4)-beta-D-Man-(1-&gt;4)-D-Man + H2O = beta-D-Man-(1-&gt;4)-beta-D-Man-(1-&gt;4)-beta-D-Man-(1-&gt;4)-D-Man + D-galactose. 1 mM Hg(2+) and Ag(2+) decrease activity by 98% and 96%, respectively. 1 mM Para-chloromercuribenzoic acid (PCMB) completely inhibits enzymatic activity. Its function is as follows. Hydrolyzes melibiose, raffinose and stachyose in the following decreasing order of reactivity: raffinose, melibiose, stachyose. Acts on both the terminal alpha-galactosyl residue and the side-chain alpha-galactosyl residue of the galactomanno-oligosaccharides. The chain is Alpha-galactosidase from Oryza sativa subsp. japonica (Rice).